The following is a 174-amino-acid chain: Gamma-crystallin S (174 aa).

2 consecutive Beta/gamma crystallin 'Greek key' domains span residues 2 to 40 (GRII…RVES) and 41 to 83 (GAWV…KMIH). The tract at residues 84-89 (FVSGSE) is connecting peptide. 2 Beta/gamma crystallin 'Greek key' domains span residues 90-130 (YKIQ…KVLD) and 131-173 (GIWI…KRLM).

This sequence belongs to the beta/gamma-crystallin family.

Functionally, crystallins are the dominant structural components of the vertebrate eye lens. In Cyprinus carpio (Common carp), this protein is Gamma-crystallin S (crygs).